Reading from the N-terminus, the 231-residue chain is 5'-methylthioadenosine/S-adenosylhomocysteine nucleosidase (231 aa).

Catalysis depends on Glu12, which acts as the Proton acceptor. Substrate contacts are provided by residues Gly78, Ile153, and Met174–Glu175. Asp198 serves as the catalytic Proton donor.

This sequence belongs to the PNP/UDP phosphorylase family. MtnN subfamily.

The catalysed reaction is S-adenosyl-L-homocysteine + H2O = S-(5-deoxy-D-ribos-5-yl)-L-homocysteine + adenine. It carries out the reaction S-methyl-5'-thioadenosine + H2O = 5-(methylsulfanyl)-D-ribose + adenine. The enzyme catalyses 5'-deoxyadenosine + H2O = 5-deoxy-D-ribose + adenine. It participates in amino-acid biosynthesis; L-methionine biosynthesis via salvage pathway; S-methyl-5-thio-alpha-D-ribose 1-phosphate from S-methyl-5'-thioadenosine (hydrolase route): step 1/2. In terms of biological role, catalyzes the irreversible cleavage of the glycosidic bond in both 5'-methylthioadenosine (MTA) and S-adenosylhomocysteine (SAH/AdoHcy) to adenine and the corresponding thioribose, 5'-methylthioribose and S-ribosylhomocysteine, respectively. Also cleaves 5'-deoxyadenosine, a toxic by-product of radical S-adenosylmethionine (SAM) enzymes, into 5-deoxyribose and adenine. This Shewanella sp. (strain W3-18-1) protein is 5'-methylthioadenosine/S-adenosylhomocysteine nucleosidase.